The primary structure comprises 319 residues: Ribosomal RNA small subunit methyltransferase H (319 aa).

Residues 39-41 (GGH), Asp-59, Phe-83, Asp-104, and Gln-111 contribute to the S-adenosyl-L-methionine site.

This sequence belongs to the methyltransferase superfamily. RsmH family.

Its subcellular location is the cytoplasm. It carries out the reaction cytidine(1402) in 16S rRNA + S-adenosyl-L-methionine = N(4)-methylcytidine(1402) in 16S rRNA + S-adenosyl-L-homocysteine + H(+). Its function is as follows. Specifically methylates the N4 position of cytidine in position 1402 (C1402) of 16S rRNA. This chain is Ribosomal RNA small subunit methyltransferase H, found in Ralstonia pickettii (strain 12J).